A 133-amino-acid polypeptide reads, in one-letter code: Ribonuclease VapC28 (133 aa).

The PINc domain maps to 1–124; that stretch reads MIVDTSAIIA…LWKGNDFGHT (124 aa). 2 residues coordinate Mg(2+): Asp4 and Asp100.

The protein belongs to the PINc/VapC protein family. Mg(2+) is required as a cofactor.

Its function is as follows. Toxic component of a type II toxin-antitoxin (TA) system. An RNase. Upon expression in M.smegmatis inhibits colony formation. Its toxic effect is neutralized by coexpression with cognate antitoxin VapB28. In Mycobacterium tuberculosis (strain ATCC 25618 / H37Rv), this protein is Ribonuclease VapC28.